The following is a 521-amino-acid chain: Cytochrome P450 1A1 (521 aa).

F229 is a binding site for substrate. Position 463 (C463) interacts with heme.

This sequence belongs to the cytochrome P450 family. Heme is required as a cofactor.

It localises to the endoplasmic reticulum membrane. The protein localises to the microsome membrane. It carries out the reaction an organic molecule + reduced [NADPH--hemoprotein reductase] + O2 = an alcohol + oxidized [NADPH--hemoprotein reductase] + H2O + H(+). Cytochromes P450 are a group of heme-thiolate monooxygenases. They oxidize a variety of structurally unrelated compounds, including steroids, fatty acids, and xenobiotics. In Chaetodon capistratus (Four-eye butterflyfish), this protein is Cytochrome P450 1A1 (cyp1a1).